The following is a 631-amino-acid chain: Phosphomethylpyrimidine synthase (631 aa).

Substrate-binding positions include N239, M268, Y297, H333, 353 to 355 (SRG), 394 to 397 (DGLR), and E433. Position 437 (H437) interacts with Zn(2+). Residue Y460 participates in substrate binding. H501 provides a ligand contact to Zn(2+). Residues C581, C584, and C589 each coordinate [4Fe-4S] cluster.

The protein belongs to the ThiC family. In terms of assembly, homodimer. [4Fe-4S] cluster is required as a cofactor.

It carries out the reaction 5-amino-1-(5-phospho-beta-D-ribosyl)imidazole + S-adenosyl-L-methionine = 4-amino-2-methyl-5-(phosphooxymethyl)pyrimidine + CO + 5'-deoxyadenosine + formate + L-methionine + 3 H(+). It participates in cofactor biosynthesis; thiamine diphosphate biosynthesis. Its function is as follows. Catalyzes the synthesis of the hydroxymethylpyrimidine phosphate (HMP-P) moiety of thiamine from aminoimidazole ribotide (AIR) in a radical S-adenosyl-L-methionine (SAM)-dependent reaction. This chain is Phosphomethylpyrimidine synthase, found in Shigella dysenteriae serotype 1 (strain Sd197).